Here is a 942-residue protein sequence, read N- to C-terminus: PH and SEC7 domain-containing protein C11E3.11c (942 aa).

The span at 1–18 shows a compositional bias: polar residues; that stretch reads MSRNASNAYLKNGNSTPS. 2 disordered regions span residues 1 to 128 and 259 to 308; these read MSRN…TRLN and SRNL…ETTR. The span at 24 to 40 shows a compositional bias: low complexity; it reads PSSLSQRSKTSTRSSKP. Composition is skewed to polar residues over residues 50-60, 90-125, 271-284, and 292-305; these read WFKNESSSRHP, ASMS…SSRT, YGNS…SSNY, and NRQS…STSE. Residues 295-497 form the SEC7 domain; that stretch reads SSLSIPKSTS…LSSYKSFASN (203 aa). The 124-residue stretch at 681–804 folds into the PH domain; the sequence is PYIKQGILKF…WIDALNYWAA (124 aa).

The chain is PH and SEC7 domain-containing protein C11E3.11c from Schizosaccharomyces pombe (strain 972 / ATCC 24843) (Fission yeast).